A 482-amino-acid polypeptide reads, in one-letter code: Adenylyltransferase and sulfurtransferase MOCS3-2 (482 aa).

Residues G125, D146, 153-157 (NNLHR), K170, and 214-215 (DN) contribute to the ATP site. Zn(2+) contacts are provided by C255 and C258. The active-site Glycyl thioester intermediate; for adenylyltransferase activity is the C272. Zn(2+)-binding residues include C330 and C333. The Rhodanese domain occupies 385 to 480 (DGEPHLLLDV…WGQDVDPDFP (96 aa)). C440 acts as the Cysteine persulfide intermediate; for sulfurtransferase activity in catalysis.

It in the N-terminal section; belongs to the HesA/MoeB/ThiF family. UBA4 subfamily. Zn(2+) serves as cofactor.

The protein resides in the cytoplasm. The catalysed reaction is [molybdopterin-synthase sulfur-carrier protein]-C-terminal Gly-Gly + ATP + H(+) = [molybdopterin-synthase sulfur-carrier protein]-C-terminal Gly-Gly-AMP + diphosphate. It carries out the reaction [molybdopterin-synthase sulfur-carrier protein]-C-terminal Gly-Gly-AMP + S-sulfanyl-L-cysteinyl-[cysteine desulfurase] + AH2 = [molybdopterin-synthase sulfur-carrier protein]-C-terminal-Gly-aminoethanethioate + L-cysteinyl-[cysteine desulfurase] + A + AMP + 2 H(+). The protein operates within tRNA modification; 5-methoxycarbonylmethyl-2-thiouridine-tRNA biosynthesis. It functions in the pathway cofactor biosynthesis; molybdopterin biosynthesis. Its function is as follows. Plays a central role in 2-thiolation of mcm(5)S(2)U at tRNA wobble positions of cytosolic tRNA(Lys), tRNA(Glu) and tRNA(Gln). Also essential during biosynthesis of the molybdenum cofactor. Acts by mediating the C-terminal thiocarboxylation of sulfur carriers URM1 and MOCS2A. Its N-terminus first activates URM1 and MOCS2A as acyl-adenylates (-COAMP), then the persulfide sulfur on the catalytic cysteine is transferred to URM1 and MOCS2A to form thiocarboxylation (-COSH) of their C-terminus. The reaction probably involves hydrogen sulfide that is generated from the persulfide intermediate and that acts as a nucleophile towards URM1 and MOCS2A. Subsequently, a transient disulfide bond is formed. Does not use thiosulfate as sulfur donor; NFS1 probably acting as a sulfur donor for thiocarboxylation reactions. The chain is Adenylyltransferase and sulfurtransferase MOCS3-2 from Zea mays (Maize).